A 58-amino-acid polypeptide reads, in one-letter code: MATVKVTLIKSMTGRIPNHKLCVKGLGLRRIGHTVEVQDTPENRGMINKAYYMLRVEG.

It belongs to the universal ribosomal protein uL30 family. In terms of assembly, part of the 50S ribosomal subunit.

This is Large ribosomal subunit protein uL30 from Pseudomonas fluorescens (strain ATCC BAA-477 / NRRL B-23932 / Pf-5).